A 300-amino-acid chain; its full sequence is U6 snRNA methylphosphate capping enzyme Amus (300 aa).

Residues 1–12 (MDLENNNNTPLT) are compositionally biased toward polar residues. 2 disordered regions span residues 1–21 (MDLE…KCAK) and 34–68 (VESK…GKPM). A compositionally biased stretch (basic and acidic residues) spans 34-44 (VESKRLKKEES). Residues 95 to 300 (DIRLDVLGTQ…KRPIQIFTKS (206 aa)) form the Bin3-type SAM domain. S-adenosyl-L-methionine-binding residues include N119 and D140.

This sequence belongs to the methyltransferase superfamily.

It localises to the nucleus. In terms of biological role, probable S-adenosyl-L-methionine-dependent methyltransferase that binds and stabilizes U6 snRNA, probably by adding a methylphosphate cap at its 5'-end. Required for U6 stability, but not stability of 7SK snRNAs, other miRNAs or tRNAs. U6 stabilization is required for efficient pre-mRNA splicing. Essential for organismal and germline development. This chain is U6 snRNA methylphosphate capping enzyme Amus, found in Drosophila melanogaster (Fruit fly).